Consider the following 270-residue polypeptide: Extracellular metalloprotease MCYG_04966 (270 aa).

The N-terminal stretch at 1–19 (MRLSLFLSGLAAAGSIVSA) is a signal peptide. Asparagine 135 is a glycosylation site (N-linked (GlcNAc...) asparagine). Histidine 184 provides a ligand contact to Zn(2+). Glutamate 185 is an active-site residue. Histidine 188 serves as a coordination point for Zn(2+). Residue asparagine 199 is glycosylated (N-linked (GlcNAc...) asparagine). Positions 208 to 227 (VADTPPQSKKTSGCPNSQDS) are disordered. Positions 212-227 (PPQSKKTSGCPNSQDS) are enriched in polar residues. Residues cysteine 221 and cysteine 247 are joined by a disulfide bond.

The protein belongs to the peptidase M43B family.

The protein resides in the secreted. Its function is as follows. Secreted metalloproteinase that allows assimilation of proteinaceous substrates. Plays a pivotal role as a pathogenicity determinant during infections and contributes to the ability of the pathogen to persist within the mammalian host. The chain is Extracellular metalloprotease MCYG_04966 from Arthroderma otae (strain ATCC MYA-4605 / CBS 113480) (Microsporum canis).